Consider the following 178-residue polypeptide: Caveolin-1 (178 aa).

Ser2 is modified (N-acetylserine). Ser2 bears the Phosphoserine mark. Residues 2–94 (SGGKYVDAEG…WKASFTTFTV (93 aa)) form a required for homooligomerization region. Topologically, residues 2–104 (SGGKYVDAEG…TKYWFYRLLS (103 aa)) are cytoplasmic. Lys5 is modified (N6-acetyllysine; alternate). Residue Lys5 forms a Glycyl lysine isopeptide (Lys-Gly) (interchain with G-Cter in ubiquitin); alternate linkage. The residue at position 6 (Tyr6) is a Phosphotyrosine. Tyr14 is subject to Phosphotyrosine; by ABL1. Residue Tyr25 is modified to Phosphotyrosine. Glycyl lysine isopeptide (Lys-Gly) (interchain with G-Cter in ubiquitin) cross-links involve residues Lys26, Lys30, Lys39, Lys47, and Lys57. The tract at residues 82-94 (DGIWKASFTTFTV) is interaction with CAVIN3. The helical intramembrane region spans 105 to 125 (ALLGIPLALLWGIYFAILSFL). Over 126–178 (HIWAVVPCIRSYLIEIQCISRVYSICIHTFCDPLFEAIGKVFSNIRATVQKEI) the chain is Cytoplasmic. Residues 131–142 (VPCIRSYLIEIQ) are interacts with SPRY1, SPRY2, SPRY3 and SPRY4. S-palmitoyl cysteine attachment occurs at residues Cys133, Cys143, and Cys156. The interval 149–160 (SICIHTFCDPLF) is interacts with SPRY1, SPRY2, and SPRY4. The segment at 167-178 (FSNIRATVQKEI) is interacts with SPRY1, SPRY2, SPRY3 and SPRY4.

It belongs to the caveolin family. As to quaternary structure, homooligomer. Interacts with GLIPR2. Interacts with NOSTRIN. Interacts with SNAP25 and STX1A. Interacts (via the N-terminus) with DPP4; the interaction is direct. Interacts with CTNNB1, CDH1 and JUP. Interacts with PACSIN2; this interaction induces membrane tubulation. Interacts with SLC7A9. Interacts with BMX and BTK. Interacts with TGFBR1. Interacts with CAVIN3 (via leucine-zipper domain) in a cholesterol-sensitive manner. Interacts with CAVIN1. Interacts with EHD2 in a cholesterol-dependent manner. Forms a ternary complex with UBXN6 and VCP; mediates CAV1 targeting to lysosomes for degradation. Interacts with ABCG1; this interaction regulates ABCG1-mediated cholesterol efflux. Interacts with NEU3; this interaction enhances NEU3 sialidase activity within caveola. Interacts (via C-terminus) with SPRY1, SPRY2 (via C-terminus), SPRY3, and SPRY4. Interacts with IGFBP5; this interaction allows trafficking of IGFBP5 from the plasma membrane to the nucleus. In terms of processing, phosphorylated at Tyr-14 by ABL1 in response to oxidative stress. Post-translationally, ubiquitinated. Undergo monoubiquitination and multi- and/or polyubiquitination. Monoubiquitination of N-terminal lysines promotes integration in a ternary complex with UBXN6 and VCP which promotes oligomeric CAV1 targeting to lysosomes for degradation. Ubiquitinated by ZNRF1; leading to degradation and modulation of the TLR4-mediated immune response.

It is found in the golgi apparatus membrane. The protein resides in the cell membrane. Its subcellular location is the membrane. It localises to the caveola. The protein localises to the membrane raft. May act as a scaffolding protein within caveolar membranes. Forms a stable heterooligomeric complex with CAV2 that targets to lipid rafts and drives caveolae formation. Mediates the recruitment of CAVIN proteins (CAVIN1/2/3/4) to the caveolae. Interacts directly with G-protein alpha subunits and can functionally regulate their activity. Involved in the costimulatory signal essential for T-cell receptor (TCR)-mediated T-cell activation. Its binding to DPP4 induces T-cell proliferation and NF-kappa-B activation in a T-cell receptor/CD3-dependent manner. Recruits CTNNB1 to caveolar membranes and may regulate CTNNB1-mediated signaling through the Wnt pathway. Negatively regulates TGFB1-mediated activation of SMAD2/3 by mediating the internalization of TGFBR1 from membrane rafts leading to its subsequent degradation. Binds 20(S)-hydroxycholesterol (20(S)-OHC). The protein is Caveolin-1 (CAV1) of Ornithorhynchus anatinus (Duckbill platypus).